The primary structure comprises 493 residues: 2-amino-4-deoxychorismate synthase (493 aa).

It belongs to the anthranilate synthase component I family. Requires Mg(2+) as cofactor.

It carries out the reaction (2S)-2-amino-4-deoxychorismate + L-glutamate = chorismate + L-glutamine. Converts chorismate to 2-amino-4-deoxychorismate (ADIC). Involved in the biosynthesis of the benzoxazolinate moiety of the enediyne antitumor antibiotic C-1027. The protein is 2-amino-4-deoxychorismate synthase (sgcD) of Streptomyces globisporus.